The following is a 500-amino-acid chain: NAD(P)H-quinone oxidoreductase chain 4, chloroplastic (500 aa).

Helical transmembrane passes span 3–23 (FFPWLTIIVVLPISAGSLIFF), 37–57 (ICICLLELLLITYVFCYHFQL), 87–107 (IGPILLTGFITTLATLAAWPI), 113–130 (LFHFLMLAMYSGQIGSFS), 134–154 (LLLFFIMWELELIPVYLLLSM), 167–187 (FILYTAGGSIFLLMGVLGMGL), 208–228 (ALEIMFYFGFLIAYAVKSPII), 242–262 (HYSTCMLLAGILLKMGAYGLV), 272–292 (AHSIFSPWLMIVGTIQIIYAA), 305–325 (IAYSSVSHMGFTIIGIGSITD), 330–350 (GAVLQIISHGFIGAALFFLAG), 386–406 (LALPGMSGFVAELIVFFGIIT), 416–436 (ILITFVMAIGMILTPIYSLSM), and 462–482 (LFVSISIFLPVIGIGIYPDFV).

This sequence belongs to the complex I subunit 4 family.

The protein resides in the plastid. The protein localises to the chloroplast thylakoid membrane. It catalyses the reaction a plastoquinone + NADH + (n+1) H(+)(in) = a plastoquinol + NAD(+) + n H(+)(out). It carries out the reaction a plastoquinone + NADPH + (n+1) H(+)(in) = a plastoquinol + NADP(+) + n H(+)(out). In Platanus occidentalis (Sycamore), this protein is NAD(P)H-quinone oxidoreductase chain 4, chloroplastic.